The primary structure comprises 201 residues: Large ribosomal subunit protein uL4 (201 aa).

Residues 45–66 (AQLTRSEVSGGGKKPWRQKGTG) are disordered.

This sequence belongs to the universal ribosomal protein uL4 family. In terms of assembly, part of the 50S ribosomal subunit.

In terms of biological role, one of the primary rRNA binding proteins, this protein initially binds near the 5'-end of the 23S rRNA. It is important during the early stages of 50S assembly. It makes multiple contacts with different domains of the 23S rRNA in the assembled 50S subunit and ribosome. Functionally, forms part of the polypeptide exit tunnel. This is Large ribosomal subunit protein uL4 from Aeromonas salmonicida (strain A449).